The following is a 496-amino-acid chain: Glutamyl-tRNA(Gln) amidotransferase subunit A (496 aa).

Residues lysine 75 and serine 150 each act as charge relay system in the active site. Serine 174 serves as the catalytic Acyl-ester intermediate.

It belongs to the amidase family. GatA subfamily. In terms of assembly, heterotrimer of A, B and C subunits.

The enzyme catalyses L-glutamyl-tRNA(Gln) + L-glutamine + ATP + H2O = L-glutaminyl-tRNA(Gln) + L-glutamate + ADP + phosphate + H(+). Allows the formation of correctly charged Gln-tRNA(Gln) through the transamidation of misacylated Glu-tRNA(Gln) in organisms which lack glutaminyl-tRNA synthetase. The reaction takes place in the presence of glutamine and ATP through an activated gamma-phospho-Glu-tRNA(Gln). The chain is Glutamyl-tRNA(Gln) amidotransferase subunit A from Burkholderia ambifaria (strain ATCC BAA-244 / DSM 16087 / CCUG 44356 / LMG 19182 / AMMD) (Burkholderia cepacia (strain AMMD)).